The chain runs to 289 residues: Eukaryotic translation initiation factor 3 subunit F (289 aa).

The region spanning 7-137 is the MPN domain; sequence VKVHPVVLFQ…LRAYVCVPLG (131 aa).

The protein belongs to the eIF-3 subunit F family. As to quaternary structure, component of the eukaryotic translation initiation factor 3 (eIF-3) complex.

The protein resides in the cytoplasm. In terms of biological role, component of the eukaryotic translation initiation factor 3 (eIF-3) complex, which is involved in protein synthesis of a specialized repertoire of mRNAs and, together with other initiation factors, stimulates binding of mRNA and methionyl-tRNAi to the 40S ribosome. The eIF-3 complex specifically targets and initiates translation of a subset of mRNAs involved in cell proliferation. The chain is Eukaryotic translation initiation factor 3 subunit F from Bombyx mori (Silk moth).